An 89-amino-acid polypeptide reads, in one-letter code: Small ribosomal subunit protein uS15 (89 aa).

The protein belongs to the universal ribosomal protein uS15 family. Part of the 30S ribosomal subunit. Forms a bridge to the 50S subunit in the 70S ribosome, contacting the 23S rRNA.

Its function is as follows. One of the primary rRNA binding proteins, it binds directly to 16S rRNA where it helps nucleate assembly of the platform of the 30S subunit by binding and bridging several RNA helices of the 16S rRNA. In terms of biological role, forms an intersubunit bridge (bridge B4) with the 23S rRNA of the 50S subunit in the ribosome. The protein is Small ribosomal subunit protein uS15 of Bacillus pumilus (strain SAFR-032).